We begin with the raw amino-acid sequence, 301 residues long: Very-long-chain aldehyde decarbonylase GL1-10 (301 aa).

3 helical membrane-spanning segments follow: residues 36–56 (VLFW…PLPV), 94–114 (FFLV…MVGI), and 187–207 (SFVG…WIVL). Positions 131–265 (LVYFLVEDYL…FTYCDYLYGT (135 aa)) constitute a Fatty acid hydroxylase domain.

This sequence belongs to the sterol desaturase family. Homodimer. Expressed ubiquitously.

The protein resides in the endoplasmic reticulum membrane. The catalysed reaction is a long-chain fatty aldehyde + 2 NADPH + O2 + H(+) = a long-chain alkane + formate + 2 NADP(+) + H2O. In terms of biological role, aldehyde decarbonylase involved in the conversion of aldehydes to alkanes. Core component of a very-long-chain alkane synthesis complex. The sequence is that of Very-long-chain aldehyde decarbonylase GL1-10 from Oryza sativa subsp. japonica (Rice).